Here is a 379-residue protein sequence, read N- to C-terminus: Alkanesulfonate monooxygenase (379 aa).

The protein belongs to the SsuD family.

It catalyses the reaction an alkanesulfonate + FMNH2 + O2 = an aldehyde + FMN + sulfite + H2O + 2 H(+). Catalyzes the desulfonation of aliphatic sulfonates. In Pseudomonas syringae pv. tomato (strain ATCC BAA-871 / DC3000), this protein is Alkanesulfonate monooxygenase.